Consider the following 336-residue polypeptide: uncharacterized protein (336 aa).

Residues 1-33 (MGSAWPAEIRKIAKISKRLLGATVILGFGVAEA) form the signal peptide.

This is an uncharacterized protein from Sinorhizobium fredii (strain NBRC 101917 / NGR234).